The chain runs to 49 residues: Light-harvesting protein B-880 alpha chain (49 aa).

Residues 1–12 are Cytoplasmic-facing; it reads MYKLWLLFDPRR. Residues 13–33 form a helical membrane-spanning segment; the sequence is TLVALSAFLFVLGLIIHFISL. Histidine 29 lines the a bacteriochlorophyll pocket. The Periplasmic segment spans residues 34–49; the sequence is STDRFNWLEGKPAVRA.

The protein belongs to the antenna complex alpha subunit family. In terms of assembly, the core complex is formed by different alpha and beta chains, binding bacteriochlorophyll molecules, and arranged most probably in tetrameric structures disposed around the reaction center. The non-pigmented gamma chains may constitute additional components.

The protein localises to the cell inner membrane. Its function is as follows. Antenna complexes are light-harvesting systems, which transfer the excitation energy to the reaction centers. The protein is Light-harvesting protein B-880 alpha chain of Rhodoblastus acidophilus (Rhodopseudomonas acidophila).